We begin with the raw amino-acid sequence, 229 residues long: Large ribosomal subunit protein uL1 (229 aa).

This sequence belongs to the universal ribosomal protein uL1 family. Part of the 50S ribosomal subunit.

In terms of biological role, binds directly to 23S rRNA. The L1 stalk is quite mobile in the ribosome, and is involved in E site tRNA release. Its function is as follows. Protein L1 is also a translational repressor protein, it controls the translation of the L11 operon by binding to its mRNA. This is Large ribosomal subunit protein uL1 from Chlorobium phaeobacteroides (strain DSM 266 / SMG 266 / 2430).